Consider the following 184-residue polypeptide: MRTFSPKLLLLLLLVLRHHAESGSIVKFLPGFEGPLPFELETGYIGIAKYWANDERVREALQIRKGSIGKWIRCNSNIHYDDDIISSIPYHMNNSINGYRSLIYSGDHDMEVPFLATEAWIRSLNYPIIDDWRPWIINNQIAGYTMTYANKMTYATIKASGHTAEYKPAESFIMFQRWISGQPL.

The signal sequence occupies residues 1 to 22 (MRTFSPKLLLLLLLVLRHHAES). A glycan (N-linked (GlcNAc...) asparagine) is linked at asparagine 93.

The protein belongs to the peptidase S10 family.

Its subcellular location is the secreted. This chain is Putative serine carboxypeptidase-like 52 (SCPL52), found in Arabidopsis thaliana (Mouse-ear cress).